The chain runs to 339 residues: Cyclic AMP-dependent transcription factor ATF-4 (339 aa).

3 disordered regions span residues 14–62 (GPWP…PSEL), 153–182 (PEEIKSEPLSPAPSVPSPPEEAPQDEHTEV), and 209–313 (QNIS…EKAD). Over residues 35-55 (VLEGSWSPSSSSLSSFSPPAS) the composition is skewed to low complexity. A compositionally biased stretch (pro residues) spans 162-173 (SPAPSVPSPPEE). The segment covering 211–226 (ISDCSDSDSGISVSGS) has biased composition (low complexity). A compositionally biased stretch (basic and acidic residues) spans 231 to 247 (SDLEPSSRAKPYSRPDP). A bZIP domain is found at 266-329 (VEKKLKKMEQ…QYLRDLLEEM (64 aa)). Residues 268-288 (KKLKKMEQNKTAATRYRQKKR) are basic motif. The leucine-zipper stretch occupies residues 294-322 (LNSECSELEKKNRELSEKADSLSREIQYL). Basic and acidic residues predominate over residues 300-313 (ELEKKNRELSEKAD).

The protein belongs to the bZIP family. Binds DNA as a homodimer and as a heterodimer.

The protein localises to the nucleus. Transcription factor that binds the cAMP response element (CRE) (consensus: 5'-GTGACGT[AC][AG]-3') and displays two biological functions, as regulator of metabolic and redox processes under normal cellular conditions, and as master transcription factor during integrated stress response (ISR). Binds to asymmetric CRE's as a heterodimer and to palindromic CRE's as a homodimer. Core effector of the ISR, which is required for adaptation to various stress such as endoplasmic reticulum (ER) stress, amino acid starvation, mitochondrial stress or oxidative stress. During ISR, atf4 translation is induced via an alternative ribosome translation re-initiation mechanism in response to eif2s1/eIF-2-alpha phosphorylation, and stress-induced atf4 acts as a master transcription factor of stress-responsive genes in order to promote cell recovery. Promotes the transcription of genes linked to amino acid sufficiency and resistance to oxidative stress to protect cells against metabolic consequences of ER oxidation. In the absence of stress, atf4 translation is at low levels and it is required for normal metabolic processes such as embryonic lens formation, fetal liver hematopoiesis, bone development and synaptic plasticity. Acts as a regulator of osteoblast differentiation by promoting expression of osteoblast-specific genes. Regulates the circadian expression of the core clock components. Mainly acts as a transcriptional activator in cellular stress adaptation, but it can also act as a transcriptional repressor. The sequence is that of Cyclic AMP-dependent transcription factor ATF-4 (atf4) from Danio rerio (Zebrafish).